The sequence spans 229 residues: MRMEKIDENTIRVLLENDDLEERGITGLDLLSNHKKIERFFYSILEEVDQDHVFANNDAVTFQVLPNEQGLELLISKNLSNLDLNKAQSEMVQGKDGITEYIKDQLLKRDTASSEDDEEDDEIESYLNQADNPTKQVVLGFDTFEDWIALAQQLHIESGVSNLFVYKHQYYAQLVFFLENTTETFVQDDLAVANEFGHKTNYTADFLSEYGQRVMENSALELTRYYFKD.

Belongs to the MecA family. In terms of assembly, homodimer.

Enables the recognition and targeting of unfolded and aggregated proteins to the ClpC protease or to other proteins involved in proteolysis. The chain is Adapter protein MecA from Latilactobacillus sakei subsp. sakei (strain 23K) (Lactobacillus sakei subsp. sakei).